The sequence spans 776 residues: Chitin synthase 1 (776 aa).

Helical transmembrane passes span 451 to 471 (LVSL…FYFL), 487 to 507 (FWIF…LFIV), 523 to 543 (LIIL…VFVI), 558 to 578 (VLVS…LMSI), 695 to 714 (VVLF…VQVY), and 723 to 743 (IYLA…AIGS).

Belongs to the chitin synthase family.

It is found in the cell membrane. It carries out the reaction [(1-&gt;4)-N-acetyl-beta-D-glucosaminyl](n) + UDP-N-acetyl-alpha-D-glucosamine = [(1-&gt;4)-N-acetyl-beta-D-glucosaminyl](n+1) + UDP + H(+). Its activity is regulated as follows. Requires proteolytic activation. In terms of biological role, polymerizes chitin, a structural polymer of the cell wall and septum, by transferring the sugar moiety of UDP-GlcNAc to the non-reducing end of the growing chitin polymer. Also involved in forming cross walls in the hyphal phase. This chain is Chitin synthase 1 (CHS1), found in Candida albicans (Yeast).